The primary structure comprises 136 residues: Small ribosomal subunit protein uS9 (136 aa).

It belongs to the universal ribosomal protein uS9 family.

The protein is Small ribosomal subunit protein uS9 of Borrelia garinii subsp. bavariensis (strain ATCC BAA-2496 / DSM 23469 / PBi) (Borreliella bavariensis).